The primary structure comprises 183 residues: ATP synthase subunit b, chloroplastic (183 aa).

A helical membrane pass occupies residues 27 to 49; sequence LATNLINLTVVVGVLIYFGKGVL.

Belongs to the ATPase B chain family. In terms of assembly, F-type ATPases have 2 components, F(1) - the catalytic core - and F(0) - the membrane proton channel. F(1) has five subunits: alpha(3), beta(3), gamma(1), delta(1), epsilon(1). F(0) has four main subunits: a(1), b(1), b'(1) and c(10-14). The alpha and beta chains form an alternating ring which encloses part of the gamma chain. F(1) is attached to F(0) by a central stalk formed by the gamma and epsilon chains, while a peripheral stalk is formed by the delta, b and b' chains.

It is found in the plastid. Its subcellular location is the chloroplast thylakoid membrane. F(1)F(0) ATP synthase produces ATP from ADP in the presence of a proton or sodium gradient. F-type ATPases consist of two structural domains, F(1) containing the extramembraneous catalytic core and F(0) containing the membrane proton channel, linked together by a central stalk and a peripheral stalk. During catalysis, ATP synthesis in the catalytic domain of F(1) is coupled via a rotary mechanism of the central stalk subunits to proton translocation. Its function is as follows. Component of the F(0) channel, it forms part of the peripheral stalk, linking F(1) to F(0). This Oryza nivara (Indian wild rice) protein is ATP synthase subunit b, chloroplastic.